Here is a 691-residue protein sequence, read N- to C-terminus: POU domain, class 6, transcription factor 2 (691 aa).

Disordered stretches follow at residues 1–61 (MIAG…RGNT), 188–297 (QQQQ…LQLV), and 435–461 (GQAA…SALS). Residues 17-28 (MNAELRGEDKAA) are compositionally biased toward basic and acidic residues. Composition is skewed to low complexity over residues 188–197 (QQQQQQQQQQ) and 206–216 (QHPQPASQAPP). Positions 217–237 (QSQPTPPHQPPPASQQLPAPP) are enriched in pro residues. Positions 238–272 (AQLEQATQPQQHQPHSHPQNQTQNQPSPTQQSSSP) are enriched in low complexity. Residues 437–447 (AATSHSPVRQA) show a composition bias toward polar residues. Low complexity predominate over residues 448 to 458 (SSSSSSSSSSS). In terms of domain architecture, POU-specific spans 476-586 (VDGVNLEEIR…VLERWMAEAE (111 aa)). The segment at residues 607 to 666 (KRKRRTSFTPQALEILNAHFEKNTHPSGQEMTEIAEKLNYDREVVRVWFCNKRQALKNTI) is a DNA-binding region (homeobox). Positions 670-691 (KQHEPTSAAPLEPLADSPEENC) are disordered.

It belongs to the POU transcription factor family. Class-6 subfamily. In terms of tissue distribution, expressed in kidney, heart, muscle, spleen and ovary, but not in lung.

The protein resides in the nucleus. Its function is as follows. Probable transcription factor likely to be involved in early steps in the differentiation of amacrine and ganglion cells. Recognizes and binds to the DNA sequence 5'-ATGCAAAT-3'. This is POU domain, class 6, transcription factor 2 (Pou6f2) from Mus musculus (Mouse).